The sequence spans 379 residues: Dual-specificity RNA methyltransferase RlmN (379 aa).

Residue glutamate 97 is the Proton acceptor of the active site. The Radical SAM core domain maps to 103–343 (QGGRGTLCVS…VRTTRGDDID (241 aa)). Cysteine 110 and cysteine 346 are joined by a disulfide. [4Fe-4S] cluster contacts are provided by cysteine 117, cysteine 121, and cysteine 124. S-adenosyl-L-methionine-binding positions include 171–172 (GE), serine 203, 225–227 (SLH), and asparagine 303. The active-site S-methylcysteine intermediate is the cysteine 346.

Belongs to the radical SAM superfamily. RlmN family. [4Fe-4S] cluster is required as a cofactor.

The protein resides in the cytoplasm. The catalysed reaction is adenosine(2503) in 23S rRNA + 2 reduced [2Fe-2S]-[ferredoxin] + 2 S-adenosyl-L-methionine = 2-methyladenosine(2503) in 23S rRNA + 5'-deoxyadenosine + L-methionine + 2 oxidized [2Fe-2S]-[ferredoxin] + S-adenosyl-L-homocysteine. The enzyme catalyses adenosine(37) in tRNA + 2 reduced [2Fe-2S]-[ferredoxin] + 2 S-adenosyl-L-methionine = 2-methyladenosine(37) in tRNA + 5'-deoxyadenosine + L-methionine + 2 oxidized [2Fe-2S]-[ferredoxin] + S-adenosyl-L-homocysteine. In terms of biological role, specifically methylates position 2 of adenine 2503 in 23S rRNA and position 2 of adenine 37 in tRNAs. m2A2503 modification seems to play a crucial role in the proofreading step occurring at the peptidyl transferase center and thus would serve to optimize ribosomal fidelity. In Pseudomonas aeruginosa (strain ATCC 15692 / DSM 22644 / CIP 104116 / JCM 14847 / LMG 12228 / 1C / PRS 101 / PAO1), this protein is Dual-specificity RNA methyltransferase RlmN.